A 188-amino-acid polypeptide reads, in one-letter code: Acyl-acyl carrier protein thioesterase ATL2, chloroplastic (188 aa).

A chloroplast-targeting transit peptide spans 1-47; the sequence is MFQATSTGAQIMHAAFPRSWRRGHVLPLRSAKIFKPLACLELRGSTG. Asp-64 is a catalytic residue.

It belongs to the 4-hydroxybenzoyl-CoA thioesterase family. In terms of tissue distribution, expressed in endodermal and peridermal cells in young and mature roots, in boundaries of stem lateral organs and developing seeds.

The protein localises to the plastid. It is found in the chloroplast. In terms of biological role, acyl-ACP thioesterase involved in the production of fatty acids and beta-keto fatty acids. Can produce beta-keto fatty acids of medium chain (8:0 and 10:0) and small amounts of 8:0 fatty acid when expressed in a heterologous organism (E.coli). May play a role in suberin biosynthesis. In Arabidopsis thaliana (Mouse-ear cress), this protein is Acyl-acyl carrier protein thioesterase ATL2, chloroplastic.